Reading from the N-terminus, the 813-residue chain is Cadherin-22 (813 aa).

The N-terminal stretch at 1–33 is a signal peptide; sequence MRPRPAGALRAGAALSPVLLLLLLLQLLGHLWA. Residues 34–621 are Extracellular-facing; the sequence is ASTPAPSSLS…AFVMAASLSP (588 aa). Cadherin domains are found at residues 61–165, 166–274, 275–391, 392–495, and 496–613; these read WVWN…EPRF, LHGP…PPRF, PQKM…PPEF, RPPS…NPPE, and LATP…TTAF. Asn159 carries N-linked (GlcNAc...) asparagine glycosylation. 2 N-linked (GlcNAc...) asparagine glycosylation sites follow: Asn463 and Asn609. A helical transmembrane segment spans residues 622-642; sequence GALIALLVCVLILVVLALLIL. Residues 643 to 813 lie on the Cytoplasmic side of the membrane; the sequence is TLRRHHKSHL…HRGDDEAPAS (171 aa). Positions 696–726 are disordered; it reads GGDPGGGAASPPQAASSSERHSLPRGPSSPE.

As to expression, strongly expressed in the pituitary gland and the brain (in the inner granular and glomerular layers of the olfactory bulb, anterior olfactory nucleus, primary olfactory cortex, Purkinje cell layer of cerebellum, and pineal gland). Low expression in lung and heart. No expression in submandibular gland, thymus, liver, spleen, adrenal, and kidney.

It is found in the cell membrane. In terms of biological role, cadherins are calcium-dependent cell adhesion proteins. They preferentially interact with themselves in a homophilic manner in connecting cells; cadherins may thus contribute to the sorting of heterogeneous cell types. PB-cadherins may have a role in the morphological organization of pituitary gland and brain tissues. This chain is Cadherin-22 (Cdh22), found in Rattus norvegicus (Rat).